The sequence spans 729 residues: Monosaccharide-sensing protein 3 (729 aa).

A run of 6 helical transmembrane segments spans residues 5-25 (VLVALAAAIGNMLQGWDNATI), 46-66 (GLIVAMSLIGATLITTFSGPV), 81-101 (VLYFLSSIVMFWSPNVYVLLF), 104-124 (LLDGFGIGLAVTLVPIYISET), 135-155 (TFPQFCGSGGMFLSYCLVFGM), and 165-185 (LMLGVLSIPSIAYFVLAAFFL). The interval 337-372 (QESQWDPERNNEDSSDQDENLNSPLLSPQTTEPDDY) is disordered. A compositionally biased stretch (polar residues) spans 356–367 (NLNSPLLSPQTT). Ser446 is modified (phosphoserine). 6 helical membrane passes run 511–531 (ALMVGVGLQILQQFAGINGVM), 557–577 (ASLLISALTTLLMLPCILVSM), 581–601 (MLSTIPILILSLVTLVIGSLV), 610–630 (LISTASVTVYLSCFVMGFGAI), 650–670 (ICALTFWICDIIVTYTLPVML), and 673–693 (IGIAGVFGIYAIVCAVAWVFV).

It belongs to the major facilitator superfamily. Sugar transporter (TC 2.A.1.1) family. As to expression, weakly expressed.

It localises to the vacuole membrane. The enzyme catalyses D-glucose(out) + H(+)(in) = D-glucose(in) + H(+)(out). The catalysed reaction is sucrose(out) + H(+)(in) = sucrose(in) + H(+)(out). In terms of biological role, sugar proton-coupled antiporter which contributes to vacuolar sugar import (e.g. monosaccharides including glucose,sucrose and fructose), particularly during stress responses (e.g. in response to cold). This is Monosaccharide-sensing protein 3 from Arabidopsis thaliana (Mouse-ear cress).